The chain runs to 569 residues: CTP synthase (569 aa).

The amidoligase domain stretch occupies residues 1-276 (MNQATPTKHV…DAYLVRRLDL (276 aa)). A CTP-binding site is contributed by S18. Residue S18 participates in UTP binding. ATP contacts are provided by residues 19–24 (SLGKGL) and D76. The Mg(2+) site is built by D76 and E150. Residues 157–159 (DIE), 197–202 (KTKPTQ), and K233 contribute to the CTP site. UTP contacts are provided by residues 197–202 (KTKPTQ) and K233. In terms of domain architecture, Glutamine amidotransferase type-1 spans 301–550 (TVALVGKYVD…VGAAIERQRE (250 aa)). Position 364 (G364) interacts with L-glutamine. Catalysis depends on C391, which acts as the Nucleophile; for glutamine hydrolysis. L-glutamine contacts are provided by residues 392–395 (LGLQ), E415, and R476. Active-site residues include H523 and E525.

This sequence belongs to the CTP synthase family. Homotetramer.

It catalyses the reaction UTP + L-glutamine + ATP + H2O = CTP + L-glutamate + ADP + phosphate + 2 H(+). The catalysed reaction is L-glutamine + H2O = L-glutamate + NH4(+). It carries out the reaction UTP + NH4(+) + ATP = CTP + ADP + phosphate + 2 H(+). The protein operates within pyrimidine metabolism; CTP biosynthesis via de novo pathway; CTP from UDP: step 2/2. Allosterically activated by GTP, when glutamine is the substrate; GTP has no effect on the reaction when ammonia is the substrate. The allosteric effector GTP functions by stabilizing the protein conformation that binds the tetrahedral intermediate(s) formed during glutamine hydrolysis. Inhibited by the product CTP, via allosteric rather than competitive inhibition. Catalyzes the ATP-dependent amination of UTP to CTP with either L-glutamine or ammonia as the source of nitrogen. Regulates intracellular CTP levels through interactions with the four ribonucleotide triphosphates. In Nocardioides sp. (strain ATCC BAA-499 / JS614), this protein is CTP synthase.